We begin with the raw amino-acid sequence, 313 residues long: 4-hydroxy-3-methylbut-2-enyl diphosphate reductase (313 aa).

Cys14 is a [4Fe-4S] cluster binding site. (2E)-4-hydroxy-3-methylbut-2-enyl diphosphate contacts are provided by His43 and His76. The dimethylallyl diphosphate site is built by His43 and His76. Isopentenyl diphosphate-binding residues include His43 and His76. [4Fe-4S] cluster is bound at residue Cys98. His126 contacts (2E)-4-hydroxy-3-methylbut-2-enyl diphosphate. His126 provides a ligand contact to dimethylallyl diphosphate. Residue His126 participates in isopentenyl diphosphate binding. The Proton donor role is filled by Glu128. Thr166 is a (2E)-4-hydroxy-3-methylbut-2-enyl diphosphate binding site. Cys196 is a [4Fe-4S] cluster binding site. (2E)-4-hydroxy-3-methylbut-2-enyl diphosphate contacts are provided by Ser224, Ser225, Asn226, and Ser269. Residues Ser224, Ser225, Asn226, and Ser269 each contribute to the dimethylallyl diphosphate site. Isopentenyl diphosphate-binding residues include Ser224, Ser225, Asn226, and Ser269.

Belongs to the IspH family. [4Fe-4S] cluster serves as cofactor.

It catalyses the reaction isopentenyl diphosphate + 2 oxidized [2Fe-2S]-[ferredoxin] + H2O = (2E)-4-hydroxy-3-methylbut-2-enyl diphosphate + 2 reduced [2Fe-2S]-[ferredoxin] + 2 H(+). The catalysed reaction is dimethylallyl diphosphate + 2 oxidized [2Fe-2S]-[ferredoxin] + H2O = (2E)-4-hydroxy-3-methylbut-2-enyl diphosphate + 2 reduced [2Fe-2S]-[ferredoxin] + 2 H(+). It functions in the pathway isoprenoid biosynthesis; dimethylallyl diphosphate biosynthesis; dimethylallyl diphosphate from (2E)-4-hydroxy-3-methylbutenyl diphosphate: step 1/1. Its pathway is isoprenoid biosynthesis; isopentenyl diphosphate biosynthesis via DXP pathway; isopentenyl diphosphate from 1-deoxy-D-xylulose 5-phosphate: step 6/6. Functionally, catalyzes the conversion of 1-hydroxy-2-methyl-2-(E)-butenyl 4-diphosphate (HMBPP) into a mixture of isopentenyl diphosphate (IPP) and dimethylallyl diphosphate (DMAPP). Acts in the terminal step of the DOXP/MEP pathway for isoprenoid precursor biosynthesis. The polypeptide is 4-hydroxy-3-methylbut-2-enyl diphosphate reductase (Tropheryma whipplei (strain TW08/27) (Whipple's bacillus)).